A 394-amino-acid polypeptide reads, in one-letter code: Ribulose bisphosphate carboxylase large chain (394 aa).

Position 5 is an N6,N6,N6-trimethyllysine (Lys-5). Substrate is bound by residues Asn-114 and Thr-164. Catalysis depends on Lys-166, which acts as the Proton acceptor. Lys-168 lines the substrate pocket. The Mg(2+) site is built by Lys-192, Asp-194, and Glu-195. N6-carboxylysine is present on Lys-192. The active-site Proton acceptor is the His-285. 3 residues coordinate substrate: Arg-286, His-318, and Ser-370.

Belongs to the RuBisCO large chain family. Type I subfamily. In terms of assembly, heterohexadecamer of 8 large chains and 8 small chains. Mg(2+) is required as a cofactor.

The protein localises to the plastid. Its subcellular location is the chloroplast. The catalysed reaction is 2 (2R)-3-phosphoglycerate + 2 H(+) = D-ribulose 1,5-bisphosphate + CO2 + H2O. The enzyme catalyses D-ribulose 1,5-bisphosphate + O2 = 2-phosphoglycolate + (2R)-3-phosphoglycerate + 2 H(+). Its function is as follows. RuBisCO catalyzes two reactions: the carboxylation of D-ribulose 1,5-bisphosphate, the primary event in carbon dioxide fixation, as well as the oxidative fragmentation of the pentose substrate in the photorespiration process. Both reactions occur simultaneously and in competition at the same active site. The chain is Ribulose bisphosphate carboxylase large chain (rbcL) from Nymphaea odorata (White water lily).